The following is a 227-amino-acid chain: Ribosomal RNA large subunit methyltransferase E (227 aa).

Residues glycine 78, tryptophan 80, aspartate 103, aspartate 119, and aspartate 143 each contribute to the S-adenosyl-L-methionine site. The active-site Proton acceptor is the lysine 183.

It belongs to the class I-like SAM-binding methyltransferase superfamily. RNA methyltransferase RlmE family.

It localises to the cytoplasm. It carries out the reaction uridine(2552) in 23S rRNA + S-adenosyl-L-methionine = 2'-O-methyluridine(2552) in 23S rRNA + S-adenosyl-L-homocysteine + H(+). Functionally, specifically methylates the uridine in position 2552 of 23S rRNA at the 2'-O position of the ribose in the fully assembled 50S ribosomal subunit. The protein is Ribosomal RNA large subunit methyltransferase E of Rickettsia bellii (strain RML369-C).